The sequence spans 400 residues: Cytochrome b (400 aa).

The next 4 helical transmembrane spans lie at 32 to 52 (FGSL…TLAM), 76 to 98 (WLIR…LHIG), 113 to 133 (TWSI…LGYV), and 179 to 199 (FFSL…MHLI). Heme b is bound by residues histidine 82 and histidine 96. Heme b contacts are provided by histidine 183 and histidine 197. Histidine 202 serves as a coordination point for a ubiquinone. 4 helical membrane passes run 226–246 (YLFK…IFVF), 290–310 (AVGV…PYLD), 322–342 (LSKV…QLGA), and 349–369 (FIVF…IIIP).

Belongs to the cytochrome b family. Fungal cytochrome b-c1 complex contains 10 subunits; 3 respiratory subunits, 2 core proteins and 5 low-molecular weight proteins. Cytochrome b-c1 complex is a homodimer. Heme b serves as cofactor.

It is found in the mitochondrion inner membrane. In terms of biological role, component of the ubiquinol-cytochrome c reductase complex (complex III or cytochrome b-c1 complex) that is part of the mitochondrial respiratory chain. The b-c1 complex mediates electron transfer from ubiquinol to cytochrome c. Contributes to the generation of a proton gradient across the mitochondrial membrane that is then used for ATP synthesis. This chain is Cytochrome b (cob), found in Epidermophyton floccosum.